The primary structure comprises 401 residues: (1R,4R,5S)-(-)-guaia-6,10(14)-diene synthase (401 aa).

Positions 134 and 139 each coordinate Mg(2+). Residues aspartate 134–aspartate 138 carry the DDXXD motif motif. A substrate-binding site is contributed by arginine 242. Mg(2+) is bound by residues asparagine 288 and serine 292. Lysine 295 serves as a coordination point for substrate. Aspartate 296 contributes to the Mg(2+) binding site. A substrate-binding site is contributed by arginine 375–tyrosine 376.

It belongs to the terpene synthase family. Mg(2+) is required as a cofactor.

It catalyses the reaction (2E,6E)-farnesyl diphosphate = (1R,4R,5S)-(-)-guaia-6,10(14)-diene + diphosphate. Its pathway is secondary metabolite biosynthesis; terpenoid biosynthesis. In terms of biological role, catalyzes the conversion of (2E,6E)-farnesyl diphosphate (FPP) to yield the bicyclic sesquiterpene guaia-6,10(14)-diene via a 1,10-cyclization, which requires the abstraction of the pyrophosphate from FPP to yield the (E,E)-germacradienyl cation. The only accepted substrate is farnesyl diphosphate (FPP). The protein is (1R,4R,5S)-(-)-guaia-6,10(14)-diene synthase of Fusarium mangiferae (Mango malformation disease fungus).